A 577-amino-acid chain; its full sequence is Isocitrate dehydrogenase kinase/phosphatase (577 aa).

Residues 318 to 324 and lysine 339 each bind ATP; that span reads APGVRGM. Aspartate 374 is a catalytic residue.

This sequence belongs to the AceK family.

The protein resides in the cytoplasm. The catalysed reaction is L-seryl-[isocitrate dehydrogenase] + ATP = O-phospho-L-seryl-[isocitrate dehydrogenase] + ADP + H(+). Bifunctional enzyme which can phosphorylate or dephosphorylate isocitrate dehydrogenase (IDH) on a specific serine residue. This is a regulatory mechanism which enables bacteria to bypass the Krebs cycle via the glyoxylate shunt in response to the source of carbon. When bacteria are grown on glucose, IDH is fully active and unphosphorylated, but when grown on acetate or ethanol, the activity of IDH declines drastically concomitant with its phosphorylation. The polypeptide is Isocitrate dehydrogenase kinase/phosphatase (Pseudomonas aeruginosa (strain UCBPP-PA14)).